Here is a 476-residue protein sequence, read N- to C-terminus: Sulfate adenylyltransferase subunit 1 (476 aa).

Positions 24 to 228 constitute a tr-type G domain; the sequence is KSLLRFLTCG…MAWYQGPTLL (205 aa). The segment at 33–40 is G1; the sequence is GSVDDGKS. 33–40 provides a ligand contact to GTP; that stretch reads GSVDDGKS. A G2 region spans residues 91 to 95; it reads GITID. Residues 112–115 are G3; it reads DTPG. Residues 112–116 and 167–170 contribute to the GTP site; these read DTPGH and NKMD. A G4 region spans residues 167 to 170; the sequence is NKMD. The G5 stretch occupies residues 205–207; the sequence is SAL.

This sequence belongs to the TRAFAC class translation factor GTPase superfamily. Classic translation factor GTPase family. CysN/NodQ subfamily. Heterodimer composed of CysD, the smaller subunit, and CysN.

The catalysed reaction is sulfate + ATP + H(+) = adenosine 5'-phosphosulfate + diphosphate. Its pathway is sulfur metabolism; hydrogen sulfide biosynthesis; sulfite from sulfate: step 1/3. Its function is as follows. With CysD forms the ATP sulfurylase (ATPS) that catalyzes the adenylation of sulfate producing adenosine 5'-phosphosulfate (APS) and diphosphate, the first enzymatic step in sulfur assimilation pathway. APS synthesis involves the formation of a high-energy phosphoric-sulfuric acid anhydride bond driven by GTP hydrolysis by CysN coupled to ATP hydrolysis by CysD. The sequence is that of Sulfate adenylyltransferase subunit 1 from Vibrio vulnificus (strain CMCP6).